We begin with the raw amino-acid sequence, 457 residues long: MNVIHINFKMKSREYSKLFGCNIYGFIRVTSMAQKIIDTSEFQRLRNMKQLGLCYLVFPAATHTRLEHSIGVYDRTRKVIERIYRQYPDREYYIPELSDKPIKLDAKIIECIKIAGLCHDIGHGPFSHVFDDVLLTDIDHPNKHHEIRSCLITEIICKRELSNELNDKHIDFIKSIINPTSSHKGAIYQIVSNNLNGIDVDKFDYLARDSKNLNIGSEFNASRLINEFIIDKNNNIAYPKQCCFDIDEMYNSRYCMHKKVYSHKTVKLLEMMLKDIFTLIDPIFKISETINDMDQFCKLTDNSIFELISTTINPRPFIKINIEPDQFMAIKKANTIYQNILSRKLYKQITEINENNGGKALCEKFIEYITNKHPNIKNSLYLFKTVRGFIGGNKNPFGQIYFYDKMEDDNSFTMPECHFAGLINKGTQEVTWHIYCKDSKILDLARFEVKNFFNTLE.

Residues 65–206 (RLEHSIGVYD…GIDVDKFDYL (142 aa)) enclose the HD domain.

This chain is Putative HD domain-containing protein L394, found in Acanthamoeba polyphaga mimivirus (APMV).